A 75-amino-acid polypeptide reads, in one-letter code: MAQSSRYSNERVEKILAEMVQVLEKNQTPTDLSLMVLGNMVTNLLNTSVAPAQRQAMARSFADALQASVRDDPSH.

This sequence belongs to the UPF0352 family.

This chain is UPF0352 protein ETA_12580, found in Erwinia tasmaniensis (strain DSM 17950 / CFBP 7177 / CIP 109463 / NCPPB 4357 / Et1/99).